Reading from the N-terminus, the 355-residue chain is UDP-N-acetylglucosamine--N-acetylmuramyl-(pentapeptide) pyrophosphoryl-undecaprenol N-acetylglucosamine transferase (355 aa).

UDP-N-acetyl-alpha-D-glucosamine-binding positions include 14 to 16 (TGG), asparagine 126, arginine 162, serine 190, isoleucine 243, 262 to 267 (ALTVSE), and glutamine 287.

Belongs to the glycosyltransferase 28 family. MurG subfamily.

It is found in the cell inner membrane. The catalysed reaction is di-trans,octa-cis-undecaprenyl diphospho-N-acetyl-alpha-D-muramoyl-L-alanyl-D-glutamyl-meso-2,6-diaminopimeloyl-D-alanyl-D-alanine + UDP-N-acetyl-alpha-D-glucosamine = di-trans,octa-cis-undecaprenyl diphospho-[N-acetyl-alpha-D-glucosaminyl-(1-&gt;4)]-N-acetyl-alpha-D-muramoyl-L-alanyl-D-glutamyl-meso-2,6-diaminopimeloyl-D-alanyl-D-alanine + UDP + H(+). It participates in cell wall biogenesis; peptidoglycan biosynthesis. Cell wall formation. Catalyzes the transfer of a GlcNAc subunit on undecaprenyl-pyrophosphoryl-MurNAc-pentapeptide (lipid intermediate I) to form undecaprenyl-pyrophosphoryl-MurNAc-(pentapeptide)GlcNAc (lipid intermediate II). The polypeptide is UDP-N-acetylglucosamine--N-acetylmuramyl-(pentapeptide) pyrophosphoryl-undecaprenol N-acetylglucosamine transferase (Vibrio vulnificus (strain YJ016)).